The following is a 359-amino-acid chain: Fructose-bisphosphate aldolase class 2 (359 aa).

Serine 50 is a binding site for D-glyceraldehyde 3-phosphate. The active-site Proton donor is aspartate 83. Histidine 84, aspartate 105, glutamate 142, and histidine 198 together coordinate Zn(2+). Glycine 199 serves as a coordination point for dihydroxyacetone phosphate. Residue histidine 232 coordinates Zn(2+). Residues 233 to 235 (GSS) and 275 to 278 (NIDT) each bind dihydroxyacetone phosphate.

The protein belongs to the class II fructose-bisphosphate aldolase family. Zn(2+) is required as a cofactor.

The catalysed reaction is beta-D-fructose 1,6-bisphosphate = D-glyceraldehyde 3-phosphate + dihydroxyacetone phosphate. It participates in carbohydrate degradation; glycolysis; D-glyceraldehyde 3-phosphate and glycerone phosphate from D-glucose: step 4/4. Catalyzes the aldol condensation of dihydroxyacetone phosphate (DHAP or glycerone-phosphate) with glyceraldehyde 3-phosphate (G3P) to form fructose 1,6-bisphosphate (FBP) in gluconeogenesis and the reverse reaction in glycolysis. The chain is Fructose-bisphosphate aldolase class 2 (fbaA) from Synechocystis sp. (strain ATCC 27184 / PCC 6803 / Kazusa).